A 435-amino-acid polypeptide reads, in one-letter code: Glutamine synthetase (435 aa).

The 83-residue stretch at 12 to 94 (KSIKYFMISY…VAADCVMDDR (83 aa)) folds into the GS beta-grasp domain. The GS catalytic domain occupies 100–435 (PRVVLKRLVA…QWERDSTLDI (336 aa)). Positions 123, 125, 180, and 187 each coordinate Mg(2+). L-glutamate is bound at residue Gly-232. Mg(2+) is bound at residue His-236. Ser-240 lines the ATP pocket. L-glutamate is bound by residues Arg-291 and Arg-315. Residues Arg-315 and Arg-320 each contribute to the ATP site. A Mg(2+)-binding site is contributed by Glu-328. Arg-330 contributes to the L-glutamate binding site.

It belongs to the glutamine synthetase family. In terms of assembly, homooctamer. It depends on Mg(2+) as a cofactor.

It carries out the reaction L-glutamate + NH4(+) + ATP = L-glutamine + ADP + phosphate + H(+). In terms of biological role, catalyzes the ATP-dependent biosynthesis of glutamine from glutamate and ammonia. The protein is Glutamine synthetase of Rhizobium leguminosarum bv. phaseoli.